Here is a 163-residue protein sequence, read N- to C-terminus: 2,3-dimethylmalate dehydratase small subunit (163 aa).

The protein belongs to the LeuD family. LeuD type 2 subfamily. As to quaternary structure, heterodimer of a large and a small subunit.

The catalysed reaction is (2R,3S)-2,3-dimethylmalate = dimethylmaleate + H2O. It participates in cofactor degradation; nicotinate degradation; propanoate and pyruvate from 6-hydroxynicotinate: step 7/8. The sequence is that of 2,3-dimethylmalate dehydratase small subunit from Eubacterium barkeri (Clostridium barkeri).